The chain runs to 346 residues: F(420)H(2) dehydrogenase subunit F (346 aa).

4Fe-4S ferredoxin-type domains are found at residues 5-34 and 46-76; these read IAEVIQHDVCAACGACEAVCPIGAVTVKKA and YEKGAAFQVCEGCLTCSRICPVVDGFIENEL. [4Fe-4S] cluster-binding residues include Cys14, Cys17, Cys20, Cys24, Cys55, Cys58, Cys61, and Cys65.

As to quaternary structure, the FPO complex is composed of at least 13 different subunits. [4Fe-4S] cluster serves as cofactor. Requires FAD as cofactor.

Its subcellular location is the membrane. It localises to the cytoplasm. It carries out the reaction methanophenazine + reduced coenzyme F420-(gamma-L-Glu)(n) = dihydromethanophenazine + oxidized coenzyme F420-(gamma-L-Glu)(n) + H(+). The catalysed reaction is reduced coenzyme F420-(gamma-L-Glu)(n) + 2 oxidized [2Fe-2S]-[ferredoxin] = oxidized coenzyme F420-(gamma-L-Glu)(n) + 2 reduced [2Fe-2S]-[ferredoxin] + 3 H(+). Functionally, component of the F(420)H(2) dehydrogenase (FPO complex) which is part of the energy-conserving F(420)H(2):heterodisulfide oxidoreductase system. The membrane-bound electron transfer system of the complex plays an important role in the metabolism of methylotrophic methanogens when the organisms grow on methanol or methylamines. Catalyzes the oxidation of methanophenazine to dihydromethanophenazine. It shuttles electrons from F(420)H(2), via FAD and iron-sulfur (Fe-S) centers, to methanophenazine (an electron carrier in the membrane). It couples the redox reaction to proton translocation (for every two electrons transferred, two hydrogen ions are translocated across the cytoplasmic membrane), and thus conserves the redox energy in a proton gradient. It also catalyzes the oxidation of F(420)H(2) with quinones such as 2,3-dimethyl-1,4-naphthoquinone, 2-methyl-1,4-naphthoquinone and tetramethyl-p-benzoquinone. Might have a dual function, acting as an electron input module when connected to the membrane integral Fpo complex, or as a soluble single subunit, being involved in the reoxydation of reduced ferredoxin in the cytoplasm. The polypeptide is F(420)H(2) dehydrogenase subunit F (fpoF) (Methanosarcina mazei (strain ATCC BAA-159 / DSM 3647 / Goe1 / Go1 / JCM 11833 / OCM 88) (Methanosarcina frisia)).